We begin with the raw amino-acid sequence, 167 residues long: Small ribosomal subunit protein uS5 (167 aa).

One can recognise an S5 DRBM domain in the interval 12–75 (LQEKLIAVNR…EKARRNMTTI (64 aa)).

The protein belongs to the universal ribosomal protein uS5 family. In terms of assembly, part of the 30S ribosomal subunit. Contacts proteins S4 and S8.

Its function is as follows. With S4 and S12 plays an important role in translational accuracy. Located at the back of the 30S subunit body where it stabilizes the conformation of the head with respect to the body. The protein is Small ribosomal subunit protein uS5 of Vibrio parahaemolyticus serotype O3:K6 (strain RIMD 2210633).